A 185-amino-acid chain; its full sequence is Ribosome-recycling factor (185 aa).

Belongs to the RRF family.

The protein resides in the cytoplasm. Responsible for the release of ribosomes from messenger RNA at the termination of protein biosynthesis. May increase the efficiency of translation by recycling ribosomes from one round of translation to another. The chain is Ribosome-recycling factor from Legionella pneumophila (strain Corby).